The following is a 163-amino-acid chain: uncharacterized protein (163 aa).

This sequence belongs to the LcrH/SycD chaperone family.

This is an uncharacterized protein from Escherichia coli (strain K12).